The primary structure comprises 248 residues: uncharacterized protein (248 aa).

9–33 (IITGASSGIGEATAILLAEKGAKLV) contacts NADP(+). Ser-141 is a binding site for substrate. Tyr-154 (proton acceptor) is an active-site residue.

Belongs to the short-chain dehydrogenases/reductases (SDR) family.

This is an uncharacterized protein from Listeria innocua serovar 6a (strain ATCC BAA-680 / CLIP 11262).